A 557-amino-acid chain; its full sequence is Dihydroxy-acid dehydratase (557 aa).

Residue Asp-78 participates in Mg(2+) binding. Cys-119 provides a ligand contact to [2Fe-2S] cluster. Residues Asp-120 and Lys-121 each contribute to the Mg(2+) site. The residue at position 121 (Lys-121) is an N6-carboxylysine. Cys-192 is a binding site for [2Fe-2S] cluster. Glu-442 lines the Mg(2+) pocket. Ser-468 serves as the catalytic Proton acceptor.

The protein belongs to the IlvD/Edd family. Homodimer. Requires [2Fe-2S] cluster as cofactor. Mg(2+) serves as cofactor.

It carries out the reaction (2R)-2,3-dihydroxy-3-methylbutanoate = 3-methyl-2-oxobutanoate + H2O. The catalysed reaction is (2R,3R)-2,3-dihydroxy-3-methylpentanoate = (S)-3-methyl-2-oxopentanoate + H2O. It functions in the pathway amino-acid biosynthesis; L-isoleucine biosynthesis; L-isoleucine from 2-oxobutanoate: step 3/4. Its pathway is amino-acid biosynthesis; L-valine biosynthesis; L-valine from pyruvate: step 3/4. In terms of biological role, functions in the biosynthesis of branched-chain amino acids. Catalyzes the dehydration of (2R,3R)-2,3-dihydroxy-3-methylpentanoate (2,3-dihydroxy-3-methylvalerate) into 2-oxo-3-methylpentanoate (2-oxo-3-methylvalerate) and of (2R)-2,3-dihydroxy-3-methylbutanoate (2,3-dihydroxyisovalerate) into 2-oxo-3-methylbutanoate (2-oxoisovalerate), the penultimate precursor to L-isoleucine and L-valine, respectively. The chain is Dihydroxy-acid dehydratase from Bacillus cytotoxicus (strain DSM 22905 / CIP 110041 / 391-98 / NVH 391-98).